The primary structure comprises 565 residues: MTKKLTPQEKKNRKPAVRACVFCHQKHLQCSNERPCKNCVKRNIAHGCKDIVRKRVKYLTGEGVSGTVSSKQSTPRKKLKTSPLSTSMSPTDSMKSDLATPVESSNHFPASISSSVDVMTATQPSAMNTPSDAQPINDILEVPPLFDNSHMINSDVPGTNITLTTQNLITPDPLSFHTNTVSNTTTDVLNKLLNDNYETESLLSVNNNGDHLLEMAHTSSGHLSNGQQFQSNYLNEEYMMLGDIILQSKQVSPSPSNTSTSENNTNTLSPSSFGYMSNINFEDFNQPKKKVVQKLKDSRPFISLGFTEELAPHDSSNNADYYGHRMTNDIVGKTDEGPGNPIINYNTKFTTDYVPPSITNNLYKTASDLYSKELKNFYYPLSYHALTKLLKVIFGGNNLSPEEKQEKRSKLLIILKLIASYRPTFIAAHRDLIQEDLLMLEMTLQRSLLDYKKLAELNSSPTIMWRRTGEIISITEDMALLLEHSSFDLLKERRFIFELMDDNSIVDYFNLFANIAVGNLKSVIQTAIQMKTKSSNLIKFTCVFTIKRDIFDIPMIVIGQFLPIV.

The segment at residues 20–48 is a DNA-binding region (zn(2)-C6 fungal-type); that stretch reads CVFCHQKHLQCSNERPCKNCVKRNIAHGC. Disordered regions lie at residues 63-106 and 250-269; these read GVSG…ESSN and QVSP…NTLS. Polar residues predominate over residues 82-93; that stretch reads SPLSTSMSPTDS. A compositionally biased stretch (low complexity) spans 252 to 269; that stretch reads SPSPSNTSTSENNTNTLS.

This sequence belongs to the ERT1/acuK family.

Its subcellular location is the nucleus. In terms of biological role, transcription factor which regulates nonfermentable carbon utilization. The sequence is that of Glucose starvation modulator protein 1 (GSM1) from Candida dubliniensis (strain CD36 / ATCC MYA-646 / CBS 7987 / NCPF 3949 / NRRL Y-17841) (Yeast).